Consider the following 437-residue polypeptide: UDP-N-acetylmuramate--L-alanine ligase (437 aa).

An ATP-binding site is contributed by G114 to S120.

It belongs to the MurCDEF family.

It localises to the cytoplasm. The catalysed reaction is UDP-N-acetyl-alpha-D-muramate + L-alanine + ATP = UDP-N-acetyl-alpha-D-muramoyl-L-alanine + ADP + phosphate + H(+). The protein operates within cell wall biogenesis; peptidoglycan biosynthesis. In terms of biological role, cell wall formation. The sequence is that of UDP-N-acetylmuramate--L-alanine ligase from Lactobacillus gasseri (strain ATCC 33323 / DSM 20243 / BCRC 14619 / CIP 102991 / JCM 1131 / KCTC 3163 / NCIMB 11718 / NCTC 13722 / AM63).